The sequence spans 303 residues: Putative ankyrin repeat protein R601 (303 aa).

4 ANK repeats span residues 86–115, 117–146, 147–176, and 200–233; these read DDNM…DVTV, NNFA…DITV, DNYF…NVDS, and NADV…DVSY.

The polypeptide is Putative ankyrin repeat protein R601 (Acanthamoeba polyphaga (Amoeba)).